A 284-amino-acid polypeptide reads, in one-letter code: Homeobox protein SIX1 (284 aa).

A DNA-binding region (homeobox) is located at residues 124–183 (GEETSYCFKEKSRGVLREWYAHNPYPSPREKRELAEATGLTTTQVSNWFKNRRQRDRAAE). A disordered region spans residues 168–271 (VSNWFKNRRQ…AHQHQLQDSL (104 aa)). A compositionally biased stretch (basic and acidic residues) spans 179–190 (DRAAEAKERENT). Residues 242 to 271 (RSSNYSLPGLTASQPSHGLQAHQHQLQDSL) are compositionally biased toward polar residues.

It belongs to the SIX/Sine oculis homeobox family. Interacts with DACH1. Interacts with EYA1. Interacts with EYA2. Interacts with CDH1. Interacts with TBX18. Interacts with CEBPA. Interacts with CEBPB. Interacts with EBF2. Phosphorylated during interphase; becomes hyperphosphorylated during mitosis. Hyperphosphorylation impairs binding to promoter elements. Post-translationally, ubiquitinated by the anaphase promoting complex (APC), leading to its proteasomal degradation.

It is found in the nucleus. It localises to the cytoplasm. In terms of biological role, transcription factor that is involved in the regulation of cell proliferation, apoptosis and embryonic development. Plays an important role in the development of several organs, including kidney, muscle and inner ear. Depending on context, functions as a transcriptional repressor or activator. Lacks an activation domain, and requires interaction with EYA family members for transcription activation. Mediates nuclear translocation of EYA1 and EYA2. Binds the 5'-TCA[AG][AG]TTNC-3' motif present in the MEF3 element in the MYOG promoter and CIDEA enhancer. Regulates the expression of numerous genes, including MYC, CCNA1, CCND1 and EZR. Acts as an activator of the IGFBP5 promoter, probably coactivated by EYA2. Repression of precursor cell proliferation in myoblasts is switched to activation through recruitment of EYA3 to the SIX1-DACH1 complex. During myogenesis, seems to act together with EYA2 and DACH2. Regulates the expression of CCNA1. Promotes brown adipocyte differentiation. The polypeptide is Homeobox protein SIX1 (SIX1) (Lagothrix lagotricha (Brown woolly monkey)).